Reading from the N-terminus, the 30-residue chain is Dermaseptin-3.1TR (30 aa).

Expressed by the skin glands.

The protein localises to the secreted. In terms of biological role, has antimicrobial activity. The sequence is that of Dermaseptin-3.1TR from Phyllomedusa trinitatis (Trinidad leaf frog).